Here is a 360-residue protein sequence, read N- to C-terminus: Phosphoserine aminotransferase (360 aa).

An L-glutamate-binding site is contributed by Arg41. Residues Trp101, Thr152, Asp172, and Gln195 each contribute to the pyridoxal 5'-phosphate site. Position 196 is an N6-(pyridoxal phosphate)lysine (Lys196). 237-238 (NT) is a binding site for pyridoxal 5'-phosphate.

Belongs to the class-V pyridoxal-phosphate-dependent aminotransferase family. SerC subfamily. Homodimer. Requires pyridoxal 5'-phosphate as cofactor.

Its subcellular location is the cytoplasm. The enzyme catalyses O-phospho-L-serine + 2-oxoglutarate = 3-phosphooxypyruvate + L-glutamate. It carries out the reaction 4-(phosphooxy)-L-threonine + 2-oxoglutarate = (R)-3-hydroxy-2-oxo-4-phosphooxybutanoate + L-glutamate. It functions in the pathway amino-acid biosynthesis; L-serine biosynthesis; L-serine from 3-phospho-D-glycerate: step 2/3. The protein operates within cofactor biosynthesis; pyridoxine 5'-phosphate biosynthesis; pyridoxine 5'-phosphate from D-erythrose 4-phosphate: step 3/5. Catalyzes the reversible conversion of 3-phosphohydroxypyruvate to phosphoserine and of 3-hydroxy-2-oxo-4-phosphonooxybutanoate to phosphohydroxythreonine. The protein is Phosphoserine aminotransferase of Burkholderia vietnamiensis (strain G4 / LMG 22486) (Burkholderia cepacia (strain R1808)).